A 111-amino-acid polypeptide reads, in one-letter code: Putative G antigen family E member 3 (111 aa).

The segment at 1–67 is disordered; that stretch reads MSEHVRTRSQ…EGAPAVQGPD (67 aa). The segment covering 8–24 has biased composition (polar residues); sequence RSQSSERGNDQESSQPV. T97 carries the post-translational modification Phosphothreonine.

It belongs to the GAGE family.

The chain is Putative G antigen family E member 3 (PAGE2B) from Homo sapiens (Human).